A 391-amino-acid polypeptide reads, in one-letter code: 3-ketoacyl-CoA thiolase (391 aa).

Catalysis depends on Cys-95, which acts as the Acyl-thioester intermediate. Active-site proton acceptor residues include His-347 and Cys-377.

It belongs to the thiolase-like superfamily. Thiolase family. As to quaternary structure, heterotetramer of two alpha chains (FadB) and two beta chains (FadA).

It localises to the cytoplasm. The enzyme catalyses an acyl-CoA + acetyl-CoA = a 3-oxoacyl-CoA + CoA. Its pathway is lipid metabolism; fatty acid beta-oxidation. Its function is as follows. Catalyzes the final step of fatty acid oxidation in which acetyl-CoA is released and the CoA ester of a fatty acid two carbons shorter is formed. The protein is 3-ketoacyl-CoA thiolase of Pseudomonas fragi.